The chain runs to 155 residues: Small ribosomal subunit protein uS9 (155 aa).

This sequence belongs to the universal ribosomal protein uS9 family.

This Rhizobium etli (strain ATCC 51251 / DSM 11541 / JCM 21823 / NBRC 15573 / CFN 42) protein is Small ribosomal subunit protein uS9.